The following is a 130-amino-acid chain: Cholecystokinin (130 aa).

An N-terminal signal peptide occupies residues 1-20 (MYIGICICVLLAALSASSTG). Positions 21 to 60 (QQTVGSMNEDPGAREIEQQNILQHPRHIRASSSAQLKPFQ) are excised as a propeptide. Y112 is modified (sulfotyrosine). Position 118 is a phenylalanine amide (F118). Positions 122-130 (SAEEYEYSS) are excised as a propeptide. 2 positions are modified to sulfotyrosine: Y126 and Y128.

This sequence belongs to the gastrin/cholecystokinin family. Post-translationally, the precursor is cleaved by proteases to produce a number of active cholecystokinins. As to expression, expressed in brain, lung, testis and throughout the length of the small intestine. In the brain, expressed predominantly in the optic tectum and brain stem.

It is found in the secreted. Functionally, this peptide hormone induces gall bladder contraction and the release of pancreatic enzymes in the gut. Its function in the brain is not clear. The polypeptide is Cholecystokinin (CCK) (Aquarana catesbeiana (American bullfrog)).